The sequence spans 307 residues: Oxygen-dependent coproporphyrinogen-III oxidase (307 aa).

Position 99 (serine 99) interacts with substrate. Residues histidine 103 and histidine 113 each coordinate a divalent metal cation. Histidine 113 functions as the Proton donor in the catalytic mechanism. 115-117 (NVR) contributes to the substrate binding site. A divalent metal cation-binding residues include histidine 152 and histidine 182. The important for dimerization stretch occupies residues 247–282 (YVEFNLVFDRGTLFGLQSGGRTESILMSMPPVVNWR). 265 to 267 (GGR) is a binding site for substrate.

Belongs to the aerobic coproporphyrinogen-III oxidase family. Homodimer. Requires a divalent metal cation as cofactor.

The protein resides in the cytoplasm. It carries out the reaction coproporphyrinogen III + O2 + 2 H(+) = protoporphyrinogen IX + 2 CO2 + 2 H2O. It participates in porphyrin-containing compound metabolism; protoporphyrin-IX biosynthesis; protoporphyrinogen-IX from coproporphyrinogen-III (O2 route): step 1/1. Functionally, involved in the heme biosynthesis. Catalyzes the aerobic oxidative decarboxylation of propionate groups of rings A and B of coproporphyrinogen-III to yield the vinyl groups in protoporphyrinogen-IX. This Paraburkholderia phytofirmans (strain DSM 17436 / LMG 22146 / PsJN) (Burkholderia phytofirmans) protein is Oxygen-dependent coproporphyrinogen-III oxidase.